We begin with the raw amino-acid sequence, 131 residues long: Holin-like protein CidA (131 aa).

The next 4 membrane-spanning stretches (helical) occupy residues 4–24 (VQLIIKLLLQLGIIIVITYIG), 30–50 (IFHLPLAGSIVGLFLFYLLLQ), 65–85 (FLLKTMVFFFIPSVVGIMDVA), and 88–108 (ITLNYILFFAVIIIGTCIVAL).

It belongs to the CidA/LrgA family. CidA subfamily.

The protein localises to the cell membrane. In terms of biological role, increases the activity of extracellular murein hydrolases possibly by mediating their export via hole formation. Inhibited by the antiholin-like proteins LrgAB. In an unstressed cell, the LrgAB products probably inhibit the function of the CidAB proteins. When a cell is stressed by the addition of antibiotics or by other factors in the environment, the CidAB proteins possibly oligomerize within the bacterial cell membrane, creating lesions that disrupt the proton motive force, which in turn results in loss of cell viability. These lesions are also hypothesized to regulate the subsequent cell lysis by either allowing the murein hydrolases access to the cell wall substrate and/or regulating their activity by a possible change in the cell wall pH that results from loss of membrane potential. This is Holin-like protein CidA from Staphylococcus aureus (strain Mu3 / ATCC 700698).